A 202-amino-acid chain; its full sequence is Imidazoleglycerol-phosphate dehydratase (202 aa).

Belongs to the imidazoleglycerol-phosphate dehydratase family.

Its subcellular location is the cytoplasm. The enzyme catalyses D-erythro-1-(imidazol-4-yl)glycerol 3-phosphate = 3-(imidazol-4-yl)-2-oxopropyl phosphate + H2O. It participates in amino-acid biosynthesis; L-histidine biosynthesis; L-histidine from 5-phospho-alpha-D-ribose 1-diphosphate: step 6/9. The chain is Imidazoleglycerol-phosphate dehydratase from Corynebacterium glutamicum (strain ATCC 13032 / DSM 20300 / JCM 1318 / BCRC 11384 / CCUG 27702 / LMG 3730 / NBRC 12168 / NCIMB 10025 / NRRL B-2784 / 534).